We begin with the raw amino-acid sequence, 202 residues long: LexA repressor (202 aa).

The segment at residues 28–48 is a DNA-binding region (H-T-H motif); sequence RAEIAQRLGFRSPNAAEEHLK. Active-site for autocatalytic cleavage activity residues include S119 and K156.

The protein belongs to the peptidase S24 family. As to quaternary structure, homodimer.

It catalyses the reaction Hydrolysis of Ala-|-Gly bond in repressor LexA.. Functionally, represses a number of genes involved in the response to DNA damage (SOS response), including recA and lexA. Binds to the 16 bp palindromic sequence 5'-CTGTATATATATACAG-3'. In the presence of single-stranded DNA, RecA interacts with LexA causing an autocatalytic cleavage which disrupts the DNA-binding part of LexA, leading to derepression of the SOS regulon and eventually DNA repair. In Klebsiella pneumoniae subsp. pneumoniae (strain ATCC 700721 / MGH 78578), this protein is LexA repressor.